Consider the following 341-residue polypeptide: NADH-quinone oxidoreductase subunit H (341 aa).

Transmembrane regions (helical) follow at residues 6-26 (LIVS…LMAY), 76-96 (LVFL…AAVI), 118-138 (VAVL…ILGG), 157-177 (VISY…LSGS), 198-218 (LPNW…IAAV), 252-272 (FLAE…LFLG), 278-298 (FADG…FYVW), and 313-333 (GLAW…TGLV).

The protein belongs to the complex I subunit 1 family. NDH-1 is composed of 14 different subunits. Subunits NuoA, H, J, K, L, M, N constitute the membrane sector of the complex.

The protein resides in the cell membrane. It carries out the reaction a quinone + NADH + 5 H(+)(in) = a quinol + NAD(+) + 4 H(+)(out). NDH-1 shuttles electrons from NADH, via FMN and iron-sulfur (Fe-S) centers, to quinones in the respiratory chain. The immediate electron acceptor for the enzyme in this species is believed to be ubiquinone. Couples the redox reaction to proton translocation (for every two electrons transferred, four hydrogen ions are translocated across the cytoplasmic membrane), and thus conserves the redox energy in a proton gradient. This subunit may bind ubiquinone. In Thermomicrobium roseum (strain ATCC 27502 / DSM 5159 / P-2), this protein is NADH-quinone oxidoreductase subunit H.